Here is a 339-residue protein sequence, read N- to C-terminus: Silicatein (339 aa).

The first 18 residues, 1–18 (MAIVYGAILFQIILIACA), serve as a signal peptide directing secretion. Residues 19 to 122 (EFPPEWHAWK…REYQAPATVS (104 aa)) constitute a propeptide that is removed on maturation. Leu-123 is subject to N,N-dimethylleucine; alternate. Position 123 is an N-methylleucine; alternate (Leu-123). Ser-188 is subject to Phosphoserine. A Phosphotyrosine modification is found at Tyr-219. Catalysis depends on residues His-286 and Asn-306. At Ser-335 the chain carries Phosphoserine.

Belongs to the peptidase C1 family. As to quaternary structure, homodimer. Homodimerization occurs as a result of non-covalent interactions and not through disulfide linkages between the two monomers.

In terms of biological role, polymerizes silica around the axial filament during spicule formation. The polypeptide is Silicatein (Petrosia ficiformis (Common Mediterranean sponge)).